The sequence spans 920 residues: Periplasmic nitrate reductase (920 aa).

Positions 1 to 29 form a signal peptide, tat-type signal; the sequence is MNRRDFIKSTAAAAACASAGIALPANLNA. The region spanning 35-91 is the 4Fe-4S Mo/W bis-MGD-type domain; the sequence is WRWDKAVCRFCGTGCGIMVATKNGKIVAVKGDPEAPVNRGLNCIKGYFNAKIMYGDD. [4Fe-4S] cluster is bound by residues Cys-42, Cys-45, Cys-49, and Cys-77. Mo-bis(molybdopterin guanine dinucleotide)-binding positions include Lys-79, Gln-147, Asn-172, Cys-176, 209–216, Met-416, Gln-420, Asn-526, 551–552, Lys-574, Asp-601, and 810–819; these read WGANMAEM, SD, and TGRVLEHWHS. Trp-886 is a binding site for substrate. Mo-bis(molybdopterin guanine dinucleotide) contacts are provided by Asn-894 and Lys-911.

It belongs to the prokaryotic molybdopterin-containing oxidoreductase family. NasA/NapA/NarB subfamily. In terms of assembly, component of the periplasmic nitrate reductase NapAB complex composed of NapA and NapB. It depends on [4Fe-4S] cluster as a cofactor. Mo-bis(molybdopterin guanine dinucleotide) serves as cofactor. Post-translationally, predicted to be exported by the Tat system. The position of the signal peptide cleavage has not been experimentally proven.

It is found in the periplasm. The enzyme catalyses 2 Fe(II)-[cytochrome] + nitrate + 2 H(+) = 2 Fe(III)-[cytochrome] + nitrite + H2O. Its function is as follows. Catalytic subunit of the periplasmic nitrate reductase complex NapAB. Receives electrons from NapB and catalyzes the reduction of nitrate to nitrite. The polypeptide is Periplasmic nitrate reductase (Campylobacter hominis (strain ATCC BAA-381 / DSM 21671 / CCUG 45161 / LMG 19568 / NCTC 13146 / CH001A)).